The sequence spans 51 residues: MARNKPFAKKLRLAKAAKQNRRVPVWVIVKTNRKVITHPKRRHWRRTKLKE.

This sequence belongs to the eukaryotic ribosomal protein eL39 family. Part of the 50S ribosomal subunit.

This is Large ribosomal subunit protein eL39 from Thermococcus kodakarensis (strain ATCC BAA-918 / JCM 12380 / KOD1) (Pyrococcus kodakaraensis (strain KOD1)).